A 248-amino-acid polypeptide reads, in one-letter code: Serine/arginine-rich splicing factor 1 (248 aa).

Position 2 is an N-acetylserine (S2). The residue at position 2 (S2) is a Phosphoserine. The region spanning 16-91 (CRIYVGNLPP…YRLRVEFPRS (76 aa)) is the RRM 1 domain. K30 participates in a covalent cross-link: Glycyl lysine isopeptide (Lys-Gly) (interchain with G-Cter in SUMO2). Residue K38 is modified to N6-acetyllysine; alternate. Residue K38 forms a Glycyl lysine isopeptide (Lys-Gly) (interchain with G-Cter in SUMO2); alternate linkage. Residues 88-134 (FPRSGRGTGRGGGGGGGGGAPRGRYGPPSRRSENRVVVSGLPPSGSW) form a disordered region. Asymmetric dimethylarginine; alternate occurs at positions 93, 97, and 109. 3 positions are modified to omega-N-methylarginine; alternate: R93, R97, and R109. The span at 93-108 (RGTGRGGGGGGGGGAP) shows a compositional bias: gly residues. The residue at position 111 (R111) is an Omega-N-methylarginine. One can recognise an RRM 2 domain in the interval 121-195 (NRVVVSGLPP…ETAYIRVKVD (75 aa)). The residue at position 133 (S133) is a Phosphoserine. An N6-acetyllysine modification is found at K179. The segment at 191–248 (RVKVDGPRSPSYGRSRSRSRSRSRNRSRSNSRSRSYSPRRSRGSPRYSPRHSRSRSRT) is disordered. The tract at residues 198-247 (RSPSYGRSRSRSRSRSRNRSRSNSRSRSYSPRRSRGSPRYSPRHSRSRSR) is interaction with SAFB1. Phosphoserine is present on residues S199 and S201. Phosphotyrosine is present on Y202. A phosphoserine mark is found at S205, S207, S209, S231, S234, and S238. Positions 205 to 248 (SRSRSRSRSRNRSRSNSRSRSYSPRRSRGSPRYSPRHSRSRSRT) are enriched in basic residues.

It belongs to the splicing factor SR family. Consists of two polypeptides of p32 and p33. Identified in the spliceosome C complex. Component of a ribonucleoprotein complex containing mRNAs and RNA-binding proteins including DDX5, HNRNPH2 and SRSF1 as well as splicing regulator ARVCF. In vitro, self-associates and binds SRSF2, SNRNP70 and U2AF1 but not U2AF2. Binds SREK1/SFRS12. Interacts with SAFB/SAFB1. Interacts with PSIP1/LEDGF. Interacts with RSRC1 (via Arg/Ser-rich domain). Interacts with ZRSR2/U2AF1-RS2. Interacts with CCDC55 (via C-terminus). Interacts with SRPK1 and a sliding docking interaction is essential for its sequential and processive phosphorylation by SRPK1. Interacts with NXF1. Interacts with CCNL1, CCNL2 and CDK11B. Interacts with RRP1B. Interacts (when phosphorylated in its RS domain) with TNPO3; promoting nuclear import. Interacts with ILDR1 (via C-terminus) and ILDR2. Post-translationally, phosphorylated by CLK1, CLK2, CLK3 and CLK4. Phosphorylated by SRPK1 at multiple serines in its RS domain via a directional (C-terminal to N-terminal) and a dual-track mechanism incorporating both processive phosphorylation (in which the kinase stays attached to the substrate after each round of phosphorylation) and distributive phosphorylation steps (in which the kinase and substrate dissociate after each phosphorylation event). The RS domain of SRSF1 binds to a docking groove in the large lobe of the kinase domain of SRPK1 and this induces certain structural changes in SRPK1 and/or RRM 2 domain of SRSF1, allowing RRM 2 to bind the kinase and initiate phosphorylation. The cycles continue for several phosphorylation steps in a processive manner (steps 1-8) until the last few phosphorylation steps (approximately steps 9-12). During that time, a mechanical stress induces the unfolding of the beta-4 motif in RRM 2, which then docks at the docking groove of SRPK1. This also signals RRM 2 to begin to dissociate, which facilitates SRSF1 dissociation after phosphorylation is completed. Asymmetrically dimethylated at arginines, probably by PRMT1, methylation promotes localization to nuclear speckles.

It is found in the cytoplasm. The protein resides in the nucleus speckle. Functionally, plays a role in preventing exon skipping, ensuring the accuracy of splicing and regulating alternative splicing. Interacts with other spliceosomal components, via the RS domains, to form a bridge between the 5'- and 3'-splice site binding components, U1 snRNP and U2AF. Can stimulate binding of U1 snRNP to a 5'-splice site-containing pre-mRNA. Binds to purine-rich RNA sequences, either the octamer, 5'-RGAAGAAC-3' (r=A or G) or the decamers, AGGACAGAGC/AGGACGAAGC. Binds preferentially to the 5'-CGAGGCG-3' motif in vitro. Three copies of the octamer constitute a powerful splicing enhancer in vitro, the ASF/SF2 splicing enhancer (ASE) which can specifically activate ASE-dependent splicing. May function as export adapter involved in mRNA nuclear export through the TAP/NXF1 pathway. The sequence is that of Serine/arginine-rich splicing factor 1 (SRSF1) from Pongo abelii (Sumatran orangutan).